Reading from the N-terminus, the 130-residue chain is Small ribosomal subunit protein uS8 (130 aa).

The protein belongs to the universal ribosomal protein uS8 family. As to quaternary structure, part of the 30S ribosomal subunit.

In terms of biological role, one of the primary rRNA binding proteins, it binds directly to 16S rRNA central domain where it helps coordinate assembly of the platform of the 30S subunit. The protein is Small ribosomal subunit protein uS8 of Pyrobaculum arsenaticum (strain DSM 13514 / JCM 11321 / PZ6).